A 458-amino-acid chain; its full sequence is 5-hydroxytryptamine receptor 2C (458 aa).

A signal peptide spans 1–32 (MVNLRNAVHSFLVHLIGLLVWQSDISVSPVAA). At 33–55 (IVTDIFNTSDGGRFKFPDGVQNW) the chain is on the extracellular side. Asn39 carries N-linked (GlcNAc...) asparagine glycosylation. A helical transmembrane segment spans residues 56 to 80 (PALSIVIIIIMTIGGNILVIMAVSM). Residues 81 to 86 (EKKLHN) lie on the Cytoplasmic side of the membrane. The chain crosses the membrane as a helical span at residues 87-111 (ATNYFLMSLAIADMLVGLLVMPLSL). Residues 112-128 (LAILYDYVWPLPRYLCP) lie on the Extracellular side of the membrane. A disulfide bridge links Cys127 with Cys207. The helical transmembrane segment at 129–151 (VWISLDVLFSTASIMHLCAISLD) threads the bilayer. Position 139 (Thr139) interacts with ergotamine. The DRY motif; important for ligand-induced conformation changes signature appears at 151–153 (DRY). The Cytoplasmic portion of the chain corresponds to 152–167 (RYVAIRNPIEHSRFNS). A helical transmembrane segment spans residues 168–189 (RTKAIMKIAIVWAISIGVSVPI). Topologically, residues 190–213 (PVIGLRDEEKVFVNNTTCVLNDPN) are extracellular. A glycan (N-linked (GlcNAc...) asparagine) is linked at Asn204. Leu209 is an ergotamine binding site. Residues 214–236 (FVLIGSFVAFFIPLTIMVITYCL) traverse the membrane as a helical segment. Topologically, residues 237–311 (TIYVLRRQAL…AINNERKASK (75 aa)) are cytoplasmic. Positions 274–301 (EENSANPNQDQNARRRKKKERRPRGTMQ) are disordered. Over residues 287 to 297 (RRRKKKERRPR) the composition is skewed to basic residues. Residues 312-336 (VLGIVFFVFLIMWCPFFITNILSVL) form a helical membrane-spanning segment. Cys337 and Cys341 are disulfide-bonded. Topologically, residues 337–347 (CEKSCNQKLME) are extracellular. A helical transmembrane segment spans residues 348–370 (KLLNVFVWIGYVCSGINPLVYTL). The NPxxY motif; important for ligand-induced conformation changes and signaling motif lies at 364–368 (NPLVY). Residues 371-458 (FNKIYRRAFS…SVVSERISSV (88 aa)) lie on the Cytoplasmic side of the membrane. The PDZ-binding signature appears at 456-458 (SSV).

This sequence belongs to the G-protein coupled receptor 1 family. As to quaternary structure, interacts with MPDZ. Interacts with ARRB2. Interacts with MPP3; this interaction stabilizes the receptor at the plasma membrane and prevents the desensitization of the HTR2C receptor-mediated calcium response. In terms of processing, N-glycosylated. As to expression, detected in brain.

The protein resides in the cell membrane. Its activity is regulated as follows. Inhibited by inverse agonist ritanserin. Functionally, G-protein coupled receptor for 5-hydroxytryptamine (serotonin). Also functions as a receptor for various drugs and psychoactive substances, including ergot alkaloid derivatives, 1-2,5,-dimethoxy-4-iodophenyl-2-aminopropane (DOI) and lysergic acid diethylamide (LSD). Ligand binding causes a conformation change that triggers signaling via guanine nucleotide-binding proteins (G proteins) and modulates the activity of downstream effectors. HTR2C is coupled to G(q)/G(11) G alpha proteins and activates phospholipase C-beta, releasing diacylglycerol (DAG) and inositol 1,4,5-trisphosphate (IP3) second messengers that modulate the activity of phosphatidylinositol 3-kinase and promote the release of Ca(2+) ions from intracellular stores, respectively. Beta-arrestin family members inhibit signaling via G proteins and mediate activation of alternative signaling pathways. Regulates neuronal activity via the activation of short transient receptor potential calcium channels in the brain, and thereby modulates the activation of pro-opiomelanocortin neurons and the release of CRH that then regulates the release of corticosterone. Plays a role in the regulation of appetite and eating behavior, responses to anxiogenic stimuli and stress. Plays a role in insulin sensitivity and glucose homeostasis. In Homo sapiens (Human), this protein is 5-hydroxytryptamine receptor 2C.